A 432-amino-acid polypeptide reads, in one-letter code: Adenylosuccinate synthetase (432 aa).

Residues 13-19 (GDEGKGK) and 41-43 (GHT) contribute to the GTP site. Aspartate 14 serves as the catalytic Proton acceptor. Residues aspartate 14 and glycine 41 each contribute to the Mg(2+) site. Residues 14 to 17 (DEGK), 39 to 42 (NAGH), threonine 130, arginine 144, glutamine 225, threonine 240, and arginine 306 each bind IMP. Catalysis depends on histidine 42, which acts as the Proton donor. 302-308 (TVTGRAR) serves as a coordination point for substrate. GTP-binding positions include arginine 308, 334 to 336 (KLD), and 416 to 418 (STG).

Belongs to the adenylosuccinate synthetase family. In terms of assembly, homodimer. Requires Mg(2+) as cofactor.

It is found in the cytoplasm. The catalysed reaction is IMP + L-aspartate + GTP = N(6)-(1,2-dicarboxyethyl)-AMP + GDP + phosphate + 2 H(+). Its pathway is purine metabolism; AMP biosynthesis via de novo pathway; AMP from IMP: step 1/2. Plays an important role in the de novo pathway of purine nucleotide biosynthesis. Catalyzes the first committed step in the biosynthesis of AMP from IMP. This Herminiimonas arsenicoxydans protein is Adenylosuccinate synthetase.